The primary structure comprises 3301 residues: Cadherin EGF LAG seven-pass G-type receptor 3 (3301 aa).

The N-terminal stretch at 1–31 is a signal peptide; the sequence is MARRPLWWGLPGPSTPVLLLLLLSLFPFSRE. Residues 32–2531 lie on the Extracellular side of the membrane; sequence ELGGGGDQDW…RLEGDLELLA (2500 aa). 2 disordered regions span residues 148–189 and 202–314; these read LPLD…ARRS and KLWE…NRHP. Residues 267–276 are compositionally biased toward basic residues; the sequence is MRSRGLFRRR. Cadherin domains are found at residues 317–424, 425–536, 537–642, 643–747, 748–849, 850–952, 953–1058, 1059–1160, and 1161–1257; these read PQYN…APVF, EQAQ…APQF, SEKR…APIF, VSTP…RPEF, TMKE…RPVF, QSAH…APQF, VASH…APVF, PAEE…SPVL, and NNFQ…VVII. Asparagine 623 is a glycosylation site (N-linked (GlcNAc...) asparagine). An N-linked (GlcNAc...) asparagine glycan is attached at asparagine 838. Asparagine 1173, asparagine 1213, asparagine 1308, and asparagine 1318 each carry an N-linked (GlcNAc...) asparagine glycan. Positions 1366–1424 constitute an EGF-like 1; calcium-binding domain; it reads DDNVCLREPCENYMKCVSVLRFDSSAPFLASTSTLFRPIQPIAGLRCRCPPGFTGDFCE. 9 disulfides stabilise this stretch: cysteine 1370–cysteine 1381, cysteine 1375–cysteine 1412, cysteine 1414–cysteine 1423, cysteine 1430–cysteine 1441, cysteine 1435–cysteine 1450, cysteine 1452–cysteine 1459, cysteine 1468–cysteine 1479, cysteine 1473–cysteine 1489, and cysteine 1491–cysteine 1502. The region spanning 1426–1460 is the EGF-like 2; calcium-binding domain; the sequence is ELDLCYSNPCRNGGACARREGGYTCVCRPRFTDCE. The region spanning 1464 to 1503 is the EGF-like 3; calcium-binding domain; it reads EAGRCVPGVCRNGGTCTNAPNGGFRCQCPAGGAFEGPRCE. The region spanning 1504 to 1708 is the Laminin G-like 1 domain; that stretch reads VAARSFPPSS…VANNGTMAGC (205 aa). N-linked (GlcNAc...) asparagine glycosylation is found at asparagine 1638 and asparagine 1702. 4 disulfides stabilise this stretch: cysteine 1682-cysteine 1708, cysteine 1715-cysteine 1726, cysteine 1720-cysteine 1735, and cysteine 1737-cysteine 1746. One can recognise an EGF-like 4; calcium-binding domain in the interval 1711-1747; that stretch reads KSHFCASGPCKNNGFCSERWGGFSCDCPVGFGGKDCR. The region spanning 1751–1933 is the Laminin G-like 2 domain; that stretch reads AHPYHFQGNG…SHRVNVEPGC (183 aa). A glycan (N-linked (GlcNAc...) asparagine) is linked at asparagine 1759. Cystine bridges form between cysteine 1904–cysteine 1933, cysteine 1939–cysteine 1950, cysteine 1944–cysteine 1959, cysteine 1961–cysteine 1970, cysteine 1974–cysteine 1985, cysteine 1979–cysteine 1997, cysteine 1999–cysteine 2008, cysteine 2016–cysteine 2029, and cysteine 2031–cysteine 2041. An EGF-like 5; calcium-binding domain is found at 1935–1971; it reads VTNPCASGPCPPHADCKDLWQTFSCTCRPGYYGPGCV. (3R)-3-hydroxyaspartate is present on aspartate 1952. Positions 1972–2002 constitute an EGF-like 6; calcium-binding domain; sequence DACLLNPCQNQGSCRHLQGAPHGYTCDCVSG. The EGF-like 7; calcium-binding domain maps to 2003–2042; it reads YFGQHCEHRVDQQCPRGWWGSPTCGPCNCDVHKGFDPNCN. An N-linked (GlcNAc...) asparagine glycan is attached at asparagine 2042. The 36-residue stretch at 2044–2079 folds into the EGF-like 8; calcium-binding domain; it reads TNGQCHCKEFHYRPRGSDSCLPCDCYPVGSTSRSCA. Disulfide bonds link cysteine 2048–cysteine 2063, cysteine 2050–cysteine 2066, cysteine 2068–cysteine 2078, cysteine 2087–cysteine 2096, and cysteine 2099–cysteine 2111. Residues 2066-2113 enclose the Laminin EGF-like domain; the sequence is CDCYPVGSTSRSCAPHSGQCPCRPGALGRQCNSCDSPFAEVTASGCRV. A Phosphotyrosine modification is found at tyrosine 2115. Residues asparagine 2166, asparagine 2185, asparagine 2375, asparagine 2465, and asparagine 2497 are each glycosylated (N-linked (GlcNAc...) asparagine). The tract at residues 2353 to 2388 is disordered; it reads LLPSQASQPSPSEVLPTSSNAENATASSVVSPPAPL. Positions 2355 to 2383 are enriched in low complexity; it reads PSQASQPSPSEVLPTSSNAENATASSVVS. The region spanning 2357–2521 is the GAIN-B domain; the sequence is QASQPSPSEV…GVLMDASPRE (165 aa). 2 cysteine pairs are disulfide-bonded: cysteine 2471-cysteine 2503 and cysteine 2491-cysteine 2505. The interval 2471 to 2521 is GPS; it reads CVQWDPPGPTDQHGMWTARDCELVHRNGSHARCRCSRTGTFGVLMDASPRE. Residues 2532 to 2552 form a helical membrane-spanning segment; the sequence is VFTHVVVAVSVTALVLTAAVL. Over 2553 to 2563 the chain is Cytoplasmic; sequence LSLRSLKSNVR. A helical transmembrane segment spans residues 2564 to 2584; that stretch reads GIHANVAAALGVAELLFLLGI. Residues 2585-2592 lie on the Extracellular side of the membrane; sequence HRTHNQLL. The helical transmembrane segment at 2593 to 2613 threads the bilayer; the sequence is CTAVAILLHYFFLSTFAWLLV. Topologically, residues 2614–2634 are cytoplasmic; that stretch reads QGLHLYRMQVEPRNVDRGAMR. The helical transmembrane segment at 2635 to 2655 threads the bilayer; the sequence is FYHALGWGVPAVLLGLAVGLD. At 2656-2673 the chain is on the extracellular side; the sequence is PEGYGNPDFCWISIHEPL. Residues 2674–2694 traverse the membrane as a helical segment; it reads IWSFAGPIVLVIVMNGTMFLL. Residues 2695–2716 are Cytoplasmic-facing; the sequence is AARTSCSTGQREAKKTSVLTLR. The helical transmembrane segment at 2717 to 2737 threads the bilayer; the sequence is SSFLLLLLVSASWLFGLLAVN. Topologically, residues 2738–2744 are extracellular; sequence HSILAFH. Residues 2745 to 2765 form a helical membrane-spanning segment; sequence YLHAGLCGLQGLAVLLLFCVL. Residues 2766 to 3301 are Cytoplasmic-facing; the sequence is NADARAAWTP…SEVPRSEGHS (536 aa). Disordered stretches follow at residues 2823 to 2844, 2879 to 2919, and 2969 to 2992; these read SSARSGRAQDQDSQRGRSYLRD, AGAD…RPLR, and SNKDAANNNQPELALTSGDETSLG. The segment covering 2881 to 2891 has biased composition (acidic residues); the sequence is ADSDSDSDLSL. The segment covering 2910 to 2919 has biased composition (basic residues); it reads TRGRFQRPLR. Tyrosine 3042 carries the phosphotyrosine modification. Residues 3083 to 3301 form a disordered region; the sequence is APVLHPLSRP…SEVPRSEGHS (219 aa). Serine 3090 is subject to Phosphoserine. The segment covering 3094 to 3111 has biased composition (basic and acidic residues); that stretch reads SQERLDTAPARLEARDRG. Composition is skewed to low complexity over residues 3168–3189 and 3239–3261; these read SPQRQLSRDPLLPSRPLDSLSR and LSSILASFNSSALSSVQSSSTPS. A compositionally biased stretch (polar residues) spans 3276 to 3289; the sequence is TPRSATSHSISELS.

Belongs to the G-protein coupled receptor 2 family. LN-TM7 subfamily. Expressed in the CNS and in the eye.

It is found in the cell membrane. In terms of biological role, receptor that may have an important role in cell/cell signaling during nervous system formation. This is Cadherin EGF LAG seven-pass G-type receptor 3 (Celsr3) from Mus musculus (Mouse).